Here is a 147-residue protein sequence, read N- to C-terminus: 3-dehydroquinate dehydratase (147 aa).

The active-site Proton acceptor is the Tyr24. Residues Asn75, His81, and Asp88 each coordinate substrate. The active-site Proton donor is the His101. Substrate-binding positions include 102–103 (IS) and Arg112.

Belongs to the type-II 3-dehydroquinase family. As to quaternary structure, homododecamer.

The catalysed reaction is 3-dehydroquinate = 3-dehydroshikimate + H2O. It participates in metabolic intermediate biosynthesis; chorismate biosynthesis; chorismate from D-erythrose 4-phosphate and phosphoenolpyruvate: step 3/7. Its function is as follows. Catalyzes a trans-dehydration via an enolate intermediate. This is 3-dehydroquinate dehydratase from Cereibacter sphaeroides (strain ATCC 17023 / DSM 158 / JCM 6121 / CCUG 31486 / LMG 2827 / NBRC 12203 / NCIMB 8253 / ATH 2.4.1.) (Rhodobacter sphaeroides).